We begin with the raw amino-acid sequence, 719 residues long: Polyribonucleotide nucleotidyltransferase (719 aa).

2 residues coordinate Mg(2+): Asp507 and Asp513. The KH domain occupies 573–633 (PKLELFSVDP…EQIKAAKDYI (61 aa)). Residues 658 to 719 (GQEFQGIVKK…NGKISVDLCE (62 aa)) form the S1 motif domain.

The protein belongs to the polyribonucleotide nucleotidyltransferase family. Mg(2+) serves as cofactor.

It localises to the cytoplasm. The catalysed reaction is RNA(n+1) + phosphate = RNA(n) + a ribonucleoside 5'-diphosphate. Functionally, involved in mRNA degradation. Catalyzes the phosphorolysis of single-stranded polyribonucleotides processively in the 3'- to 5'-direction. This is Polyribonucleotide nucleotidyltransferase from Campylobacter jejuni (strain RM1221).